A 545-amino-acid polypeptide reads, in one-letter code: Chaperonin GroEL (545 aa).

ATP-binding positions include 29-32, lysine 50, 86-90, glycine 413, and aspartate 495; these read TLGP and DGTTT.

This sequence belongs to the chaperonin (HSP60) family. Forms a cylinder of 14 subunits composed of two heptameric rings stacked back-to-back. Interacts with the co-chaperonin GroES.

It is found in the cytoplasm. The enzyme catalyses ATP + H2O + a folded polypeptide = ADP + phosphate + an unfolded polypeptide.. Functionally, together with its co-chaperonin GroES, plays an essential role in assisting protein folding. The GroEL-GroES system forms a nano-cage that allows encapsulation of the non-native substrate proteins and provides a physical environment optimized to promote and accelerate protein folding. The protein is Chaperonin GroEL of Borreliella afzelii (strain PKo) (Borrelia afzelii).